A 428-amino-acid chain; its full sequence is Septin homolog spn7 (428 aa).

The region spanning 15–290 (KGKKLRIMVA…ENYRTEKLSN (276 aa)) is the Septin-type G domain. The G1 motif stretch occupies residues 25–32 (GSSYTSYQ). Residues 25 to 32 (GSSYTSYQ), G86, 166 to 174 (NSNAFTEEE), and G224 contribute to the GTP site. Positions 83–86 (EVNG) are G3 motif. The tract at residues 165–168 (GNSN) is G4 motif. Disordered regions lie at residues 287 to 345 (KLSN…SEEL) and 387 to 414 (KEFPHRTTSSRNSLPNNTTKELEMKKMD). A compositionally biased stretch (polar residues) spans 290-307 (NDSPSNTSLSLQKQNSIV). The span at 309 to 325 (NEDKRSVNGSERTETRS) shows a compositional bias: basic and acidic residues. Polar residues-rich tracts occupy residues 326–339 (SIDQSEMRTNVSDS) and 392–405 (RTTSSRNSLPNNTT).

It belongs to the TRAFAC class TrmE-Era-EngA-EngB-Septin-like GTPase superfamily. Septin GTPase family. Component of the sporulation-specific septin complex composed of at least spn2, spn5, spn6 and spn7.

It localises to the cytoplasm. The protein resides in the nucleus. The protein localises to the forespore membrane. Functionally, septin-like protein involved in the correct orientation of forespore membrane extension during sporulation. Binds phosphatidylinositol 4-phosphate. This chain is Septin homolog spn7 (spn7), found in Schizosaccharomyces pombe (strain 972 / ATCC 24843) (Fission yeast).